The chain runs to 765 residues: Protein transport protein sec23-2 (765 aa).

Zn(2+) contacts are provided by cysteine 56, cysteine 60, cysteine 79, and cysteine 82. A phosphoserine mark is found at serine 565 and serine 566.

Belongs to the SEC23/SEC24 family. SEC23 subfamily. The COPII coat is composed of at least 5 proteins: the sec23/24 complex, the sec13/31 complex, and the protein sar1.

It is found in the cytoplasm. Its subcellular location is the cytoplasmic vesicle. The protein localises to the COPII-coated vesicle membrane. It localises to the endoplasmic reticulum membrane. The protein resides in the golgi apparatus membrane. Component of the coat protein complex II (COPII) which promotes the formation of transport vesicles from the endoplasmic reticulum (ER). The coat has two main functions, the physical deformation of the endoplasmic reticulum membrane into vesicles and the selection of cargo molecules. This chain is Protein transport protein sec23-2 (sec232), found in Schizosaccharomyces pombe (strain 972 / ATCC 24843) (Fission yeast).